The chain runs to 149 residues: SsrA-binding protein (149 aa).

The protein belongs to the SmpB family.

It localises to the cytoplasm. Functionally, required for rescue of stalled ribosomes mediated by trans-translation. Binds to transfer-messenger RNA (tmRNA), required for stable association of tmRNA with ribosomes. tmRNA and SmpB together mimic tRNA shape, replacing the anticodon stem-loop with SmpB. tmRNA is encoded by the ssrA gene; the 2 termini fold to resemble tRNA(Ala) and it encodes a 'tag peptide', a short internal open reading frame. During trans-translation Ala-aminoacylated tmRNA acts like a tRNA, entering the A-site of stalled ribosomes, displacing the stalled mRNA. The ribosome then switches to translate the ORF on the tmRNA; the nascent peptide is terminated with the 'tag peptide' encoded by the tmRNA and targeted for degradation. The ribosome is freed to recommence translation, which seems to be the essential function of trans-translation. The polypeptide is SsrA-binding protein (Wolbachia pipientis wMel).